The sequence spans 565 residues: Acyl-CoA ligase easD (565 aa).

ATP is bound by residues 213–221, 354–359, aspartate 438, arginine 457, and lysine 555; these read TSGTSGKQK and HAYGLT. The segment at 284–354 is SBD1; the sequence is DMQLMLKTIE…KLRPTWKINH (71 aa). The interval 355-417 is SBD2; that stretch reads AYGLTETGVV…FNSPSCFLGY (63 aa).

Belongs to the ATP-dependent AMP-binding enzyme family.

It participates in antibiotic biosynthesis. In terms of biological role, acyl-CoA ligase; part of the gene cluster that mediates the biosynthesis of emericellamides, secondary metabolites acting as antibiotics. The biosynthesis of emericellamides initiates from the highly reducing polyketide synthase easB which catalyzes the formation of the linear polyketide chain. EasB produces several polyketides that can be further processed by the downstream enzymes. The polyketides are released from easB as linear polyketide carboxylic acids, which are converted to CoA thioesters by the acyl-CoA ligase easD. The substrates are then loaded onto the acyltransferase easC, which shuttles them to the first thiolation (T) domain of the nonribosomal peptide synthetase easA. EasA then performs condensation of the polyketides with one glycine, two alanine, one valine and one leucine residues. A last step of cyclization leads to the production of emericellamides. The polypeptide is Acyl-CoA ligase easD (Emericella nidulans (strain FGSC A4 / ATCC 38163 / CBS 112.46 / NRRL 194 / M139) (Aspergillus nidulans)).